Reading from the N-terminus, the 321-residue chain is D-alanine--D-alanine ligase (321 aa).

In terms of domain architecture, ATP-grasp spans 121-315 (RSWFLTNNIN…FVNLIEEILK (195 aa)). 148–199 (IKRPYVIKPFTQGSSIGVEVIFEEDDFNFANYDFPYGDEVIIEKYIKGRELQ) is a binding site for ATP. Mg(2+)-binding residues include Glu268, Glu282, and Asn284.

Belongs to the D-alanine--D-alanine ligase family. The cofactor is Mg(2+). Mn(2+) serves as cofactor.

Its subcellular location is the cytoplasm. The catalysed reaction is 2 D-alanine + ATP = D-alanyl-D-alanine + ADP + phosphate + H(+). It participates in cell wall biogenesis; peptidoglycan biosynthesis. Functionally, cell wall formation. This is D-alanine--D-alanine ligase from Rickettsia bellii (strain OSU 85-389).